Reading from the N-terminus, the 338-residue chain is Pyridoxal 5'-phosphate synthase subunit PdxS (338 aa).

Position 66 (Asp66) interacts with D-ribose 5-phosphate. The Schiff-base intermediate with D-ribose 5-phosphate role is filled by Lys123. Residue Gly195 coordinates D-ribose 5-phosphate. Lys207 is a binding site for D-glyceraldehyde 3-phosphate. Residues Gly256 and 277–278 contribute to the D-ribose 5-phosphate site; that span reads GS.

The protein belongs to the PdxS/SNZ family. In the presence of PdxT, forms a dodecamer of heterodimers.

It catalyses the reaction aldehydo-D-ribose 5-phosphate + D-glyceraldehyde 3-phosphate + L-glutamine = pyridoxal 5'-phosphate + L-glutamate + phosphate + 3 H2O + H(+). Its pathway is cofactor biosynthesis; pyridoxal 5'-phosphate biosynthesis. Functionally, catalyzes the formation of pyridoxal 5'-phosphate from ribose 5-phosphate (RBP), glyceraldehyde 3-phosphate (G3P) and ammonia. The ammonia is provided by the PdxT subunit. Can also use ribulose 5-phosphate and dihydroxyacetone phosphate as substrates, resulting from enzyme-catalyzed isomerization of RBP and G3P, respectively. This chain is Pyridoxal 5'-phosphate synthase subunit PdxS, found in Saccharolobus islandicus (strain L.S.2.15 / Lassen #1) (Sulfolobus islandicus).